The following is a 445-amino-acid chain: Phosphoglucosamine mutase (445 aa).

Ser102 (phosphoserine intermediate) is an active-site residue. Mg(2+)-binding residues include Ser102, Asp241, Asp243, and Asp245. The residue at position 102 (Ser102) is a Phosphoserine.

Belongs to the phosphohexose mutase family. Mg(2+) serves as cofactor. Post-translationally, activated by phosphorylation.

The catalysed reaction is alpha-D-glucosamine 1-phosphate = D-glucosamine 6-phosphate. In terms of biological role, catalyzes the conversion of glucosamine-6-phosphate to glucosamine-1-phosphate. In Haemophilus influenzae (strain ATCC 51907 / DSM 11121 / KW20 / Rd), this protein is Phosphoglucosamine mutase.